Consider the following 401-residue polypeptide: 1-deoxy-D-xylulose 5-phosphate reductoisomerase (401 aa).

The NADPH site is built by threonine 11, glycine 12, serine 13, isoleucine 14, arginine 38, asparagine 39, and asparagine 125. A 1-deoxy-D-xylulose 5-phosphate-binding site is contributed by lysine 126. Glutamate 127 serves as a coordination point for NADPH. Aspartate 151 contributes to the Mn(2+) binding site. 4 residues coordinate 1-deoxy-D-xylulose 5-phosphate: serine 152, glutamate 153, serine 179, and histidine 202. Position 153 (glutamate 153) interacts with Mn(2+). NADPH is bound at residue glycine 208. Serine 215, asparagine 220, lysine 221, and glutamate 224 together coordinate 1-deoxy-D-xylulose 5-phosphate. A Mn(2+)-binding site is contributed by glutamate 224.

Belongs to the DXR family. Requires Mg(2+) as cofactor. Mn(2+) is required as a cofactor.

It carries out the reaction 2-C-methyl-D-erythritol 4-phosphate + NADP(+) = 1-deoxy-D-xylulose 5-phosphate + NADPH + H(+). It functions in the pathway isoprenoid biosynthesis; isopentenyl diphosphate biosynthesis via DXP pathway; isopentenyl diphosphate from 1-deoxy-D-xylulose 5-phosphate: step 1/6. Functionally, catalyzes the NADPH-dependent rearrangement and reduction of 1-deoxy-D-xylulose-5-phosphate (DXP) to 2-C-methyl-D-erythritol 4-phosphate (MEP). This chain is 1-deoxy-D-xylulose 5-phosphate reductoisomerase, found in Paraburkholderia phymatum (strain DSM 17167 / CIP 108236 / LMG 21445 / STM815) (Burkholderia phymatum).